The primary structure comprises 601 residues: Kelch-like ECH-associated protein 1A (601 aa).

The 74-residue stretch at 44 to 117 (MDELRHHEML…VISRLIDFAY (74 aa)) folds into the BTB domain. The 101-residue stretch at 153–253 (KNLEPSNVIG…LNAVHIYALP (101 aa)) folds into the BACK domain. 6 Kelch repeats span residues 292–337 (PTPH…PCSG), 338–388 (LGAC…PRNR), 389–435 (VGVG…ARLG), 436–482 (AGVA…VRSG), 484–529 (GVVC…CRSA), and 530–576 (HGVS…GRSG).

The protein belongs to the KEAP1 family. In terms of assembly, homodimer and heterodimer; heterodimerizes with keap1b. Component of the BCR(KEAP1) E3 ubiquitin ligase complex, at least composed of 2 molecules of cul3, 2 molecules of keap1 (keap1a and/or keap1b), and rbx1. Interacts with nfe2l2/nrf2; the interaction is direct. In terms of processing, non-enzymatic covalent modifications of reactive cysteines by electrophile metabolites inactivate the BCR(KEAP1) complex. Widely expressed.

It is found in the cytoplasm. It localises to the nucleus. Its pathway is protein modification; protein ubiquitination. With respect to regulation, ubiquitin ligase activity of the BCR(KEAP1) complex is inhibited by oxidative stress and electrophile metabolites such as sulforaphane. Electrophile metabolites react with reactive cysteine residues in keap1 and trigger non-enzymatic covalent modifications of these cysteine residues, leading to inactivate the ubiquitin ligase activity of the BCR(KEAP1) complex. Its function is as follows. Substrate-specific adapter of a BCR (BTB-CUL3-RBX1) E3 ubiquitin ligase complex that regulates the response to oxidative stress by targeting nfe2l2/nrf2 for ubiquitination. Keap1 acts as a key sensor of oxidative and electrophilic stress: in normal conditions, the BCR(KEAP1) complex mediates ubiquitination and degradation of nfe2l2/nrf2, a transcription factor regulating expression of many cytoprotective genes. In response to oxidative stress, different electrophile metabolites trigger non-enzymatic covalent modifications of highly reactive cysteine residues in KEAP1, leading to inactivate the ubiquitin ligase activity of the BCR(KEAP1) complex, promoting nfe2l2/nrf2 nuclear accumulation and expression of phase II detoxifying enzymes. This chain is Kelch-like ECH-associated protein 1A, found in Danio rerio (Zebrafish).